We begin with the raw amino-acid sequence, 155 residues long: 6,7-dimethyl-8-ribityllumazine synthase (155 aa).

5-amino-6-(D-ribitylamino)uracil-binding positions include F23, 57-59 (AFE), and 81-83 (AVI). A (2S)-2-hydroxy-3-oxobutyl phosphate-binding site is contributed by 86 to 87 (ST). Residue H89 is the Proton donor of the active site. F114 contributes to the 5-amino-6-(D-ribitylamino)uracil binding site. R128 contacts (2S)-2-hydroxy-3-oxobutyl phosphate.

It belongs to the DMRL synthase family.

It catalyses the reaction (2S)-2-hydroxy-3-oxobutyl phosphate + 5-amino-6-(D-ribitylamino)uracil = 6,7-dimethyl-8-(1-D-ribityl)lumazine + phosphate + 2 H2O + H(+). The protein operates within cofactor biosynthesis; riboflavin biosynthesis; riboflavin from 2-hydroxy-3-oxobutyl phosphate and 5-amino-6-(D-ribitylamino)uracil: step 1/2. Functionally, catalyzes the formation of 6,7-dimethyl-8-ribityllumazine by condensation of 5-amino-6-(D-ribitylamino)uracil with 3,4-dihydroxy-2-butanone 4-phosphate. This is the penultimate step in the biosynthesis of riboflavin. This Geobacter sulfurreducens (strain ATCC 51573 / DSM 12127 / PCA) protein is 6,7-dimethyl-8-ribityllumazine synthase.